Reading from the N-terminus, the 391-residue chain is 1-deoxy-D-xylulose 5-phosphate reductoisomerase (391 aa).

NADPH contacts are provided by Thr-11, Gly-12, Ser-13, Ile-14, Gly-37, Asn-39, and Asn-125. Lys-126 serves as a coordination point for 1-deoxy-D-xylulose 5-phosphate. Glu-127 is a binding site for NADPH. Asp-151 contacts Mn(2+). 1-deoxy-D-xylulose 5-phosphate-binding residues include Ser-152, Glu-153, Ser-176, and His-199. Mn(2+) is bound at residue Glu-153. NADPH is bound at residue Gly-205. 1-deoxy-D-xylulose 5-phosphate contacts are provided by Ser-212, Asn-217, Lys-218, and Glu-221. Glu-221 provides a ligand contact to Mn(2+).

It belongs to the DXR family. The cofactor is Mg(2+). Mn(2+) serves as cofactor.

The catalysed reaction is 2-C-methyl-D-erythritol 4-phosphate + NADP(+) = 1-deoxy-D-xylulose 5-phosphate + NADPH + H(+). It participates in isoprenoid biosynthesis; isopentenyl diphosphate biosynthesis via DXP pathway; isopentenyl diphosphate from 1-deoxy-D-xylulose 5-phosphate: step 1/6. In terms of biological role, catalyzes the NADPH-dependent rearrangement and reduction of 1-deoxy-D-xylulose-5-phosphate (DXP) to 2-C-methyl-D-erythritol 4-phosphate (MEP). The polypeptide is 1-deoxy-D-xylulose 5-phosphate reductoisomerase (Heliobacterium modesticaldum (strain ATCC 51547 / Ice1)).